Here is a 314-residue protein sequence, read N- to C-terminus: Olfactory receptor 11H7 (314 aa).

Residues 1-24 (MNNSQISTVTQFVLLGFPGPWKIQ) lie on the Extracellular side of the membrane. Residue asparagine 2 is glycosylated (N-linked (GlcNAc...) asparagine). The helical transmembrane segment at 25–45 (IIFFSMILLVYIFTLTGNMAI) threads the bilayer. At 46–57 (ICAVRWDHRLHT) the chain is on the cytoplasmic side. The helical transmembrane segment at 58 to 78 (PMYVLLANFSFLEIWYVTCTV) threads the bilayer. Topologically, residues 79–97 (PNMLVNFFSKTKTISFSGC) are extracellular. A disulfide bridge connects residues cysteine 97 and cysteine 179. Residues 98–118 (FTQFHFFFSLGTTECFFLCVM) traverse the membrane as a helical segment. Topologically, residues 119 to 142 (AYDRYLAICHPLHYPSIMTGQLCG) are cytoplasmic. A helical membrane pass occupies residues 143-163 (ILVSLCWLIGFLGHSISIFFI). Residues 164–201 (FQLPFCGPNIIDHFLCDVDPLMALSSAPTHIIGHVFHS) are Extracellular-facing. The chain crosses the membrane as a helical span at residues 202–222 (VSSLFINLTMVYILGSYTLVL). Topologically, residues 223–244 (RTVLQVPSSAGWQKAISTCGSH) are cytoplasmic. A helical transmembrane segment spans residues 245 to 265 (LVVVSLFYGAIMLMYVSPTPG). The Extracellular segment spans residues 266-271 (NSVAMH). Residues 272-292 (KLITLIYSVVTPVLNPLIYSL) form a helical membrane-spanning segment. Topologically, residues 293–314 (RNKDMKYALHHVFCGMRIIQRS) are cytoplasmic.

It belongs to the G-protein coupled receptor 1 family.

It is found in the cell membrane. In terms of biological role, odorant receptor. Activated by isovaleric acid. The sequence is that of Olfactory receptor 11H7 (OR11H7) from Homo sapiens (Human).